The sequence spans 1170 residues: MGTKLKKSNNDITIFSENEYNEIVEMLRDYSNGDNLEFEVSFKNINYPNFMRITEHYINITPENKIESNNYLDISLIFPDKNVYRVSLFNQEQIGEFITKFSKASSNDISRYIVSLDPSDDIEIVYKNRGSGKLIGIDNWAITIKSTEEIPLVAGKSKISKPKITGSERIMYRYKTRYSFTINKNSRIDITDVKSSPIIWKLMTVPSNYELELELINKIDINTLESELLNVFMIIQDTKIPISKAESDTVVEEYRNLLNVRQTNNLDSRNVISVNSNHIINFIPNRYAVTDKADGERYFLFSLNSGIYLLSINLTVKKLNIPVLEKRYQNMLIDGEYIKTTGHDLFMVFDVIFAEGTDYRYDNTYSLPKRIIIINNIIDKCFGNLIPFNDYTDKHNNLELDSIKTYYKSELSNYWKNFKNRLNKSTDLFITRKLYLVPYGIDSSEIFMYADMIWKLYVYNELTPYQLDGIIYTPINSPYLIRGGIDAYDTIPMEYKWKPPSQNSIDFYIRFKKDVSGADAVYYDNSVERAEGKPYKICLLYVGLNKQGQEIPIQFKVNGVEQTANIYTKDGEATDINGNAINDNTVVEFVFDTLKIDMDDSYKWIPIRTRYDKTESVQKYHKRYGNNLQIANRIWKTITNPITEDIISSLGDPTTFNKEITLLSDFRDTKYNKQALTYYQKNTSNAAGMRAFNNWIKSNMITTYCRDGSKVLDIGCGRGGDLIKFINAGVEFYVGIDIDNNGLYVINDSANNRYKNLKKTIQNIPPMYFINADARGLFTLEAQEKILPGMPDFNKSLINKYLVGNKYDTINCQFTIHYYLSDELSWNNFCKNINNQLKDNGYLLITSFDGNLIHNKLKGKQKLSSSYTDNRGNKNIFFEINKIYSDTDKVGLGMAIDLYNSLISNPGTYIREYLVFPEFLEKSLKEKCGLELVESDLFYNIFNTYKNYFKKTYNEYGMTDVSSKKHSEIREFYLSLEGNANNDIEIDIARASFKLAMLNRYYVFRKTSTINITEPSRIVNELNNRIDLGKFIMPYFRTNNMFIDLDNVDTDINRVYRNIRNKYRTTRPHVYLIKHNINENRLEDIYLSNNKLDFSKIKNGSDPKVLLIYKSPDKQFYPLYYQNYQSMPFDLDQIYLPDKKKYLLDSDRIINDLNILINLTEKIKNIPQLS.

Lys292 serves as the catalytic N6-GMP-lysine intermediate. An mRNA cap 0 methyltransferase domain is found at 684-1007 (SNAAGMRAFN…LNRYYVFRKT (324 aa)). An mRNA-binding site is contributed by 693 to 694 (NN). S-adenosyl-L-methionine is bound by residues Lys697, Gly715, Asp737, and 813 to 815 (QFT).

It in the N-terminal section; belongs to the dsDNA virus mRNA guanylyltransferase family. The protein in the C-terminal section; belongs to the class I-like SAM-binding methyltransferase superfamily. mRNA cap 0 methyltransferase family.

The protein resides in the virion. The catalysed reaction is a 5'-end triphospho-ribonucleoside in mRNA + H2O = a 5'-end diphospho-ribonucleoside in mRNA + phosphate + H(+). It carries out the reaction a 5'-end diphospho-ribonucleoside in mRNA + GTP + H(+) = a 5'-end (5'-triphosphoguanosine)-ribonucleoside in mRNA + diphosphate. It catalyses the reaction a 5'-end (5'-triphosphoguanosine)-ribonucleoside in mRNA + S-adenosyl-L-methionine = a 5'-end (N(7)-methyl 5'-triphosphoguanosine)-ribonucleoside in mRNA + S-adenosyl-L-homocysteine. Its pathway is mRNA processing; mRNA capping. Its function is as follows. Responsible for methylating the 5'-cap structure of mRNAs. This chain is Probable mRNA-capping enzyme, found in Acanthamoeba polyphaga mimivirus (APMV).